We begin with the raw amino-acid sequence, 227 residues long: Ras-related protein Rab-3C (227 aa).

GTP contacts are provided by Ser39, Gly42, Lys43, Thr44, Ser45, Thr56, Ser57, Ser61, and Thr62. Residue Thr44 coordinates Mg(2+). The short motif at 53–66 (DSFTSAFVSTVGID) is the Switch 1 element. Mg(2+) is bound by residues Thr62 and Asp85. Thr86 is modified (phosphothreonine; by LRRK2). The Switch 2 signature appears at 86–104 (TAGQERYRTITTAYYRGAM). Gly88, Asn143, Lys144, Asp146, Ala174, and Lys175 together coordinate GTP. Phosphoserine is present on residues Ser196 and Ser198. The segment at 202-227 (DPAITAAKQSTRLKETPPPPQPNCGC) is disordered. Thr206 carries the post-translational modification Phosphothreonine. The span at 217–227 (TPPPPQPNCGC) shows a compositional bias: pro residues. Residues Cys225 and Cys227 are each lipidated (S-geranylgeranyl cysteine). Cysteine methyl ester is present on Cys227.

Belongs to the small GTPase superfamily. Rab family. In terms of assembly, interacts with RIMS1, RIMS2, RPH3A and RPH3AL. Interacts with GDI2, CHM and CHML; phosphorylation at Thr-86 disrupts these interactions. Interacts with MADD (via uDENN domain); the GTP-bound form is preferred for interaction. The cofactor is Mg(2+). In terms of processing, phosphorylation of Thr-86 in the switch II region by LRRK2 prevents the association of RAB regulatory proteins, including CHM, CHML and RAB GDP dissociation inhibitor GDI2.

The protein resides in the cell membrane. It catalyses the reaction GTP + H2O = GDP + phosphate + H(+). Regulated by guanine nucleotide exchange factors (GEFs) which promote the exchange of bound GDP for free GTP. Regulated by GTPase activating proteins (GAPs) which increase the GTP hydrolysis activity. Inhibited by GDP dissociation inhibitors (GDIs) which prevent Rab-GDP dissociation. In terms of biological role, the small GTPases Rab are key regulators of intracellular membrane trafficking, from the formation of transport vesicles to their fusion with membranes. Rabs cycle between an inactive GDP-bound form and an active GTP-bound form that is able to recruit to membranes different sets of downstream effectors directly responsible for vesicle formation, movement, tethering and fusion. The chain is Ras-related protein Rab-3C from Mus musculus (Mouse).